Here is a 352-residue protein sequence, read N- to C-terminus: Holliday junction branch migration complex subunit RuvB (352 aa).

The segment at 13 to 201 is large ATPase domain (RuvB-L); the sequence is FSFRKKELRL…FGISQKIEFY (189 aa). ATP is bound by residues Arg41, Gly82, Lys85, Thr86, Thr87, 148-150, Arg191, Tyr201, and Arg238; that span reads EDF. Thr86 lines the Mg(2+) pocket. Residues 202–273 form a small ATPAse domain (RuvB-S) region; it reads TCDELKQIIV…LIKKALNSYQ (72 aa). Residues 276 to 352 are head domain (RuvB-H); sequence EKGLDSLDRH…KYIDSKDDNF (77 aa). DNA contacts are provided by Arg330 and Arg335.

Belongs to the RuvB family. In terms of assembly, homohexamer. Forms an RuvA(8)-RuvB(12)-Holliday junction (HJ) complex. HJ DNA is sandwiched between 2 RuvA tetramers; dsDNA enters through RuvA and exits via RuvB. An RuvB hexamer assembles on each DNA strand where it exits the tetramer. Each RuvB hexamer is contacted by two RuvA subunits (via domain III) on 2 adjacent RuvB subunits; this complex drives branch migration. In the full resolvosome a probable DNA-RuvA(4)-RuvB(12)-RuvC(2) complex forms which resolves the HJ.

The protein localises to the cytoplasm. The catalysed reaction is ATP + H2O = ADP + phosphate + H(+). Its function is as follows. The RuvA-RuvB-RuvC complex processes Holliday junction (HJ) DNA during genetic recombination and DNA repair, while the RuvA-RuvB complex plays an important role in the rescue of blocked DNA replication forks via replication fork reversal (RFR). RuvA specifically binds to HJ cruciform DNA, conferring on it an open structure. The RuvB hexamer acts as an ATP-dependent pump, pulling dsDNA into and through the RuvAB complex. RuvB forms 2 homohexamers on either side of HJ DNA bound by 1 or 2 RuvA tetramers; 4 subunits per hexamer contact DNA at a time. Coordinated motions by a converter formed by DNA-disengaged RuvB subunits stimulates ATP hydrolysis and nucleotide exchange. Immobilization of the converter enables RuvB to convert the ATP-contained energy into a lever motion, pulling 2 nucleotides of DNA out of the RuvA tetramer per ATP hydrolyzed, thus driving DNA branch migration. The RuvB motors rotate together with the DNA substrate, which together with the progressing nucleotide cycle form the mechanistic basis for DNA recombination by continuous HJ branch migration. Branch migration allows RuvC to scan DNA until it finds its consensus sequence, where it cleaves and resolves cruciform DNA. The protein is Holliday junction branch migration complex subunit RuvB of Prochlorococcus marinus (strain AS9601).